We begin with the raw amino-acid sequence, 156 residues long: SsrA-binding protein (156 aa).

Belongs to the SmpB family.

It is found in the cytoplasm. Its function is as follows. Required for rescue of stalled ribosomes mediated by trans-translation. Binds to transfer-messenger RNA (tmRNA), required for stable association of tmRNA with ribosomes. tmRNA and SmpB together mimic tRNA shape, replacing the anticodon stem-loop with SmpB. tmRNA is encoded by the ssrA gene; the 2 termini fold to resemble tRNA(Ala) and it encodes a 'tag peptide', a short internal open reading frame. During trans-translation Ala-aminoacylated tmRNA acts like a tRNA, entering the A-site of stalled ribosomes, displacing the stalled mRNA. The ribosome then switches to translate the ORF on the tmRNA; the nascent peptide is terminated with the 'tag peptide' encoded by the tmRNA and targeted for degradation. The ribosome is freed to recommence translation, which seems to be the essential function of trans-translation. The chain is SsrA-binding protein from Lactiplantibacillus plantarum (strain ATCC BAA-793 / NCIMB 8826 / WCFS1) (Lactobacillus plantarum).